A 194-amino-acid chain; its full sequence is Ion-translocating oxidoreductase complex subunit A (194 aa).

The next 6 helical transmembrane spans lie at Met1–Val21, Cys48–Phe68, Leu73–Val93, Leu103–Met123, Val135–Ile155, and Pro172–Ile192.

Belongs to the NqrDE/RnfAE family. As to quaternary structure, the complex is composed of six subunits: RnfA, RnfB, RnfC, RnfD, RnfE and RnfG.

It localises to the cell inner membrane. Its function is as follows. Part of a membrane-bound complex that couples electron transfer with translocation of ions across the membrane. This is Ion-translocating oxidoreductase complex subunit A from Buchnera aphidicola subsp. Baizongia pistaciae (strain Bp).